A 352-amino-acid polypeptide reads, in one-letter code: C-C chemokine receptor type 5 (352 aa).

Residues 1–30 lie on the Extracellular side of the membrane; that stretch reads MDYQVSSPTYDIDYYTSGPCQKINVKQIAA. Tyr-3 bears the Sulfotyrosine mark. O-linked (GalNAc...) serine glycosylation is found at Ser-6 and Ser-7. A sulfotyrosine mark is found at Tyr-10, Tyr-14, and Tyr-15. Cystine bridges form between Cys-20-Cys-269 and Cys-101-Cys-178. Residues 31–58 traverse the membrane as a helical segment; the sequence is RLLPPLYSLVFIFGFVGNMLVILILINC. Over 59 to 68 the chain is Cytoplasmic; sequence KRLKSMTDIY. Residues 69-89 traverse the membrane as a helical segment; sequence LLNLAISDLFFLLTVPFWAHY. Topologically, residues 90–102 are extracellular; that stretch reads AAAQWDFGNTMCQ. The chain crosses the membrane as a helical span at residues 103 to 124; sequence LLTGLYFIGFFSGIFFIILLTI. At 125–141 the chain is on the cytoplasmic side; the sequence is DRYLAIVHAVFALKART. Residues 142–166 traverse the membrane as a helical segment; it reads VTFGVVTSVITWVVAVFASLPGIIF. The Extracellular portion of the chain corresponds to 167-198; sequence TRSQKEGLHYTCSSHFPYSQYQFWKNFQTLKI. A helical transmembrane segment spans residues 199–218; the sequence is VILGLVLPLLVMVICYSGIL. Residues 219–235 are Cytoplasmic-facing; that stretch reads KTLLRCRNEKKRHRAVR. The chain crosses the membrane as a helical span at residues 236-260; the sequence is LIFTIMIVYFLFWAPYNIVLLLNTF. The Extracellular portion of the chain corresponds to 261–277; sequence QEFFGLNNCSSSNRLDQ. Residues 278–301 form a helical membrane-spanning segment; sequence AMQVTETLGMTHCCINPIIYAFVG. The Cytoplasmic segment spans residues 302–352; that stretch reads EKFRNYLLVFFQKHIAKHFCKCCSIFQQEAPERASSVYTRSTGEQEISVGL. S-palmitoyl cysteine attachment occurs at residues Cys-321, Cys-323, and Cys-324. Phosphoserine; by BARK1 occurs at positions 336, 337, 342, and 349.

This sequence belongs to the G-protein coupled receptor 1 family. In terms of assembly, interacts with PRAF2. Efficient ligand binding to CCL3/MIP-1alpha and CCL4/MIP-1beta requires sulfation, O-glycosylation and sialic acid modifications. Glycosylation on Ser-6 is required for efficient binding of CCL4. Interacts with GRK2. Interacts with ARRB1 and ARRB2. Interacts with CNIH4. Interacts with S100A4; this interaction stimulates T-lymphocyte chemotaxis. Sulfated on at least 2 of the N-terminal tyrosines. Sulfation is required for efficient binding of the chemokines, CCL3 and CCL4. In terms of processing, palmitoylation in the C-terminal is important for cell surface expression. Post-translationally, phosphorylation on serine residues in the C-terminal is stimulated by binding CC chemokines especially by APO-RANTES. O-glycosylated, but not N-glycosylated. Ser-6 appears to be the major site even if Ser-7 may be also O-glycosylated. Also sialylated glycans present which contribute to chemokine binding. Thr-16 and Ser-17 may also be glycosylated and, if so, with small moieties such as a T-antigen.

Its subcellular location is the cell membrane. Receptor for a number of inflammatory CC-chemokines including CCL3/MIP-1-alpha, CCL4/MIP-1-beta and RANTES and subsequently transduces a signal by increasing the intracellular calcium ion level. May play a role in the control of granulocytic lineage proliferation or differentiation. Participates in T-lymphocyte migration to the infection site by acting as a chemotactic receptor. The sequence is that of C-C chemokine receptor type 5 (CCR5) from Hylobates moloch (Silvery gibbon).